The chain runs to 276 residues: Large ribosomal subunit protein uL2 (276 aa).

The disordered stretch occupies residues 223–276; that stretch reads GVAMNPVDHPHGGGEGRGKGHHPTSPWGLPTKGYKTRRGKRPSDKFIVRRRNEV. Composition is skewed to basic and acidic residues over residues 230-240 and 263-276; these read DHPHGGGEGRG and RPSDKFIVRRRNEV.

Belongs to the universal ribosomal protein uL2 family. As to quaternary structure, part of the 50S ribosomal subunit. Forms a bridge to the 30S subunit in the 70S ribosome.

Its function is as follows. One of the primary rRNA binding proteins. Required for association of the 30S and 50S subunits to form the 70S ribosome, for tRNA binding and peptide bond formation. It has been suggested to have peptidyltransferase activity; this is somewhat controversial. Makes several contacts with the 16S rRNA in the 70S ribosome. The polypeptide is Large ribosomal subunit protein uL2 (Thermotoga neapolitana (strain ATCC 49049 / DSM 4359 / NBRC 107923 / NS-E)).